The primary structure comprises 357 residues: Thiamine thiazole synthase, chloroplastic (357 aa).

Residues A102, 123 to 124, G131, and V196 each bind substrate; that span reads EQ. 2,3-didehydroalanine (Cys) is present on C233. Substrate-binding positions include D235, H250, M304, and 314-316; that span reads RMG.

It belongs to the THI4 family. In terms of assembly, homooctamer. It depends on Fe cation as a cofactor. Post-translationally, during the catalytic reaction, a sulfide is transferred from Cys-233 to a reaction intermediate, generating a dehydroalanine residue.

Its subcellular location is the plastid. The protein localises to the chloroplast. The catalysed reaction is [ADP-thiazole synthase]-L-cysteine + glycine + NAD(+) = [ADP-thiazole synthase]-dehydroalanine + ADP-5-ethyl-4-methylthiazole-2-carboxylate + nicotinamide + 3 H2O + 2 H(+). In terms of biological role, involved in biosynthesis of the thiamine precursor thiazole. Catalyzes the conversion of NAD and glycine to adenosine diphosphate 5-(2-hydroxyethyl)-4-methylthiazole-2-carboxylic acid (ADT), an adenylated thiazole intermediate. The reaction includes an iron-dependent sulfide transfer from a conserved cysteine residue of the protein to a thiazole intermediate. The enzyme can only undergo a single turnover, which suggests it is a suicide enzyme. May have additional roles in adaptation to various stress conditions and in DNA damage tolerance. The sequence is that of Thiamine thiazole synthase, chloroplastic from Chlamydomonas reinhardtii (Chlamydomonas smithii).